A 390-amino-acid polypeptide reads, in one-letter code: Multidrug export protein EmrA (390 aa).

Residues 1 to 24 are Cytoplasmic-facing; sequence MSANAETQTPQQPVKKSGKRKRLL. Residues 25-45 form a helical membrane-spanning segment; it reads LLLTLLFIIIAVAIGIYWFLV. The Periplasmic portion of the chain corresponds to 46 to 390; that stretch reads LRHFEETDDA…IDDIVKANAG (345 aa). Positions 120-180 form a coiled coil; that stretch reads INSKQLQANI…QAQLDVAIQQ (61 aa).

It belongs to the membrane fusion protein (MFP) (TC 8.A.1) family. Homodimer and homotrimer. Part of the tripartite efflux system EmrAB-TolC, which is composed of an inner membrane transporter, EmrB, a periplasmic membrane fusion protein, EmrA, and an outer membrane component, TolC. The complex forms a large protein conduit and can translocate molecules across both the inner and outer membranes. Interacts with EmrB. EmrAB complex forms a dimer in vitro.

It localises to the cell inner membrane. In terms of biological role, part of the tripartite efflux system EmrAB-TolC, which confers resistance to antibiotics such as CCCP, FCCP, 2,4-dinitrophenol and nalidixic acid. EmrA is a drug-binding protein that provides a physical link between EmrB and TolC. In Escherichia coli (strain K12), this protein is Multidrug export protein EmrA (emrA).